Here is a 105-residue protein sequence, read N- to C-terminus: MPGRKARRNAPLNPTRAELPPEFAAQLRKIGDKVYCTWSAPDITAVLAQMPGKKSRKSTMRRSPSPTRVPADLKDECDQLRRIGDKVNLRQKLLNFISKLFNLIT.

The BH3 1 signature appears at 27-35 (LRKIGDKVY). The interval 50 to 72 (MPGKKSRKSTMRRSPSPTRVPAD) is disordered. A BH3 2 motif is present at residues 80–88 (LRRIGDKVN). The segment at 92 to 101 (KLLNFISKLF) is required for mitochondrial location.

The protein belongs to the PMAIP1 family. Interacts with MCL1. Interacts with BCL2A1. Interacts with BAX. Interacts with BCL2L10.

The protein resides in the mitochondrion. Promotes activation of caspases and apoptosis. Promotes mitochondrial membrane changes and efflux of apoptogenic proteins from the mitochondria. Contributes to p53/TP53-dependent apoptosis after radiation exposure. Promotes proteasomal degradation of MCL1. Competes with BAK1 and with BIM/BCL2L11 for binding to MCL1; can displace BAK1 and BIM/BCL2L11 from their binding sites. The chain is Phorbol-12-myristate-13-acetate-induced protein 1 (Pmaip1) from Rattus norvegicus (Rat).